The sequence spans 209 residues: dITP/XTP pyrophosphatase (209 aa).

7–12 (TGNKGK) lines the substrate pocket. The Proton acceptor role is filled by D73. A Mg(2+)-binding site is contributed by D73. Substrate contacts are provided by residues S74, 155-158 (FGYD), K178, and 183-184 (HR).

Belongs to the HAM1 NTPase family. As to quaternary structure, homodimer. Mg(2+) serves as cofactor.

It carries out the reaction XTP + H2O = XMP + diphosphate + H(+). It catalyses the reaction dITP + H2O = dIMP + diphosphate + H(+). The catalysed reaction is ITP + H2O = IMP + diphosphate + H(+). Functionally, pyrophosphatase that catalyzes the hydrolysis of nucleoside triphosphates to their monophosphate derivatives, with a high preference for the non-canonical purine nucleotides XTP (xanthosine triphosphate), dITP (deoxyinosine triphosphate) and ITP. Seems to function as a house-cleaning enzyme that removes non-canonical purine nucleotides from the nucleotide pool, thus preventing their incorporation into DNA/RNA and avoiding chromosomal lesions. The chain is dITP/XTP pyrophosphatase from Sulfurovum sp. (strain NBC37-1).